We begin with the raw amino-acid sequence, 35 residues long: MASEIFTIAGLSIVLTLVGVALGYGILRITQGGAE.

Residues Ala9–Leu27 traverse the membrane as a helical segment.

This sequence belongs to the PetM family. The 4 large subunits of the cytochrome b6-f complex are cytochrome b6, subunit IV (17 kDa polypeptide, PetD), cytochrome f and the Rieske protein, while the 4 small subunits are PetG, PetL, PetM and PetN. The complex functions as a dimer.

Its subcellular location is the cellular thylakoid membrane. Functionally, component of the cytochrome b6-f complex, which mediates electron transfer between photosystem II (PSII) and photosystem I (PSI), cyclic electron flow around PSI, and state transitions. The polypeptide is Cytochrome b6-f complex subunit 7 (Synechococcus sp. (strain JA-3-3Ab) (Cyanobacteria bacterium Yellowstone A-Prime)).